Consider the following 471-residue polypeptide: Glutamate--tRNA ligase (471 aa).

The short motif at 9-19 is the 'HIGH' region element; that stretch reads PSPTGYLHVGG. Residues cysteine 98, cysteine 100, cysteine 125, and histidine 127 each contribute to the Zn(2+) site. The 'KMSKS' region signature appears at 237 to 241; sequence KLSKR. Residue lysine 240 participates in ATP binding.

This sequence belongs to the class-I aminoacyl-tRNA synthetase family. Glutamate--tRNA ligase type 1 subfamily. In terms of assembly, monomer. Requires Zn(2+) as cofactor.

It localises to the cytoplasm. It carries out the reaction tRNA(Glu) + L-glutamate + ATP = L-glutamyl-tRNA(Glu) + AMP + diphosphate. Its function is as follows. Catalyzes the attachment of glutamate to tRNA(Glu) in a two-step reaction: glutamate is first activated by ATP to form Glu-AMP and then transferred to the acceptor end of tRNA(Glu). The chain is Glutamate--tRNA ligase from Shigella dysenteriae serotype 1 (strain Sd197).